Reading from the N-terminus, the 995-residue chain is Meckelin (995 aa).

The N-terminal stretch at 1–36 (MATRGGAGVAMAVWSLLSARAVTAFLLLFLPRFLQA) is a signal peptide. A cysteine-rich region spans residues 37 to 280 (QTFSFPFQQP…FQFIFENTAG (244 aa)). The Extracellular segment spans residues 37 to 519 (QTFSFPFQQP…SVTYEMDHGE (483 aa)). 11 disulfides stabilise this stretch: cysteine 49–cysteine 62, cysteine 65–cysteine 78, cysteine 80–cysteine 97, cysteine 100–cysteine 114, cysteine 117–cysteine 127, cysteine 129–cysteine 150, cysteine 153–cysteine 170, cysteine 173–cysteine 184, cysteine 186–cysteine 197, cysteine 237–cysteine 246, and cysteine 253–cysteine 268. Residue asparagine 141 is glycosylated (N-linked (GlcNAc...) asparagine). N-linked (GlcNAc...) asparagine glycosylation occurs at asparagine 179. Asparagine 242 carries an N-linked (GlcNAc...) asparagine glycan. N-linked (GlcNAc...) asparagine glycosylation is present at asparagine 318. Cysteine 357 and cysteine 378 are disulfide-bonded. The chain crosses the membrane as a helical span at residues 520-548 (AHVQTDIALGVLGGLAVLASLLKTAGWKR). The Cytoplasmic portion of the chain corresponds to 549-558 (RIGSPMIDLQ). Residues 559–590 (TVVKFLVYYAGDLANVFFIITVGTGLYWLIFF) form a helical membrane-spanning segment. Residues 591 to 603 (KAQKSVSVLLPMP) lie on the Extracellular side of the membrane. The helical transmembrane segment at 604–631 (IQEERFVTYVGCAFALKALQFLHKLISQ) threads the bilayer. Over 632–670 (ITIDVFFIDWERPKGKVLKAVEGEGGVRSATVPVSIWRT) the chain is Cytoplasmic. The helical intramembrane region spans 671 to 679 (YFVANEWNE). The chain crosses the membrane as a discontinuously helical span at residues 671–701 (YFVANEWNEIQTVRKINSLFQVLTVLFFLEV). An intramembrane segment occupies 680–688 (IQTVRKINS). The helical intramembrane region spans 689–701 (LFQVLTVLFFLEV). The Extracellular segment spans residues 702–731 (VGFKNLALMDSSSSLSRNPPSYIAPYSCIL). An intramembrane region (helical) is located at residues 732-757 (RYAVSAALWLAIGIIQVVFFAVFYER). A discontinuously helical transmembrane segment spans residues 732-771 (RYAVSAALWLAIGIIQVVFFAVFYERFIEDKIRQFVDLCS). Residues 758 to 762 (FIEDK) lie within the membrane without spanning it. The segment at residues 763–771 (IRQFVDLCS) is an intramembrane region (helical). The Cytoplasmic segment spans residues 772 to 926 (MSNISVFLLS…SIFYNDEGYS (155 aa)). The stretch at 828–917 (GQTFEIAISN…MEFMEPMEKS (90 aa)) forms a coiled coil. Residues 927-929 (FSS) constitute an intramembrane region (helical). A discontinuously helical membrane pass occupies residues 927–952 (FSSVLYYGNEATLLIFDLLFFCVVDL). An intramembrane segment occupies 930-936 (VLYYGNE). An intramembrane region (helical) is located at residues 937 to 952 (ATLLIFDLLFFCVVDL). The Extracellular portion of the chain corresponds to 953 to 957 (ACQNF). The helical transmembrane segment at 958–985 (ILASFLTYLQQEIFRYIRNTVGQKNLAS) threads the bilayer. At 986 to 995 (KTLVDQRFLI) the chain is on the cytoplasmic side.

As to quaternary structure, homodimer. Part of the tectonic-like complex (also named B9 complex). Interacts with DNAJB9, DNAJC10 and mutated SFTPC. Interacts with SYNE2 during the early establishment of cell polarity. Interacts (via C-terminus) with FLNA. Interacts with TMEM218. Interacts with WNT5A. Interacts with ROR2. Widely expressed in adult and fetal tissues. Expressed at higher level in spinal cord.

It is found in the cell membrane. The protein localises to the endoplasmic reticulum membrane. It localises to the cell projection. The protein resides in the cilium. Its subcellular location is the cytoplasm. It is found in the cytoskeleton. The protein localises to the cilium basal body. Its function is as follows. Required for ciliary structure and function. Part of the tectonic-like complex which is required for tissue-specific ciliogenesis and may regulate ciliary membrane composition. Involved in centrosome migration to the apical cell surface during early ciliogenesis. Involved in the regulation of cilia length and appropriate number through the control of centrosome duplication. Is a key regulator of stereociliary bundle orientation. Required for epithelial cell branching morphology. Essential for endoplasmic reticulum-associated degradation (ERAD) of surfactant protein C (SFTPC). Involved in the negative regulation of canonical Wnt signaling, and activation of the non-canonical cascade stimulated by WNT5A. In non-canonical Wnt signaling, it may act as ROR2 coreceptor. The sequence is that of Meckelin (TMEM67) from Homo sapiens (Human).